Reading from the N-terminus, the 251-residue chain is MRKPIIAGNWKMNKTAAKAGQFAEDVKNNVPSSDAVESVVAAPALFLQELVRLTEGTNLRVAAQNCYFEDEGAFTGEISPFALADLGVSYVIIGHSERREYFHETDEDINKKAHAIFKHGMTPIICCGETLDQREAGQTDTWVRGQIRAALAGLTEEQVIKSVIAYEPIWAIGTGKSSTSADANETCAVIRAEVADAVSQKAADAVRIQYGGSVKPENIADYLAESDIDGALVGGASLEPASFLALLEAVK.

Residue 9-11 (NWK) coordinates substrate. The active-site Electrophile is the histidine 95. Glutamate 167 acts as the Proton acceptor in catalysis. Substrate contacts are provided by residues glycine 173, serine 213, and 234–235 (GG).

Belongs to the triosephosphate isomerase family. Homodimer.

The protein localises to the cytoplasm. The enzyme catalyses D-glyceraldehyde 3-phosphate = dihydroxyacetone phosphate. It participates in carbohydrate biosynthesis; gluconeogenesis. The protein operates within carbohydrate degradation; glycolysis; D-glyceraldehyde 3-phosphate from glycerone phosphate: step 1/1. Its function is as follows. Involved in the gluconeogenesis. Catalyzes stereospecifically the conversion of dihydroxyacetone phosphate (DHAP) to D-glyceraldehyde-3-phosphate (G3P). In Listeria innocua serovar 6a (strain ATCC BAA-680 / CLIP 11262), this protein is Triosephosphate isomerase 1.